A 426-amino-acid polypeptide reads, in one-letter code: Molybdopterin molybdenumtransferase 1 (426 aa).

Belongs to the MoeA family. Requires Mg(2+) as cofactor.

It carries out the reaction adenylyl-molybdopterin + molybdate = Mo-molybdopterin + AMP + H(+). The protein operates within cofactor biosynthesis; molybdopterin biosynthesis. Its function is as follows. Catalyzes the insertion of molybdate into adenylated molybdopterin with the concomitant release of AMP. The protein is Molybdopterin molybdenumtransferase 1 (moeA1) of Mycobacterium tuberculosis (strain ATCC 25618 / H37Rv).